A 140-amino-acid chain; its full sequence is MAKKITGYIKLQVPAGKANPSPPIGPALGQHGVNIMEFCKAFNAKTQADEGTITPVVITVYADRSFTFITKTPPAPVLIKKALGLQSGSAVPNKTKVGKLTKDQVREIATKKMPDLNAASLEAAMKTIEGTARSMGVEIV.

The protein belongs to the universal ribosomal protein uL11 family. As to quaternary structure, part of the ribosomal stalk of the 50S ribosomal subunit. Interacts with L10 and the large rRNA to form the base of the stalk. L10 forms an elongated spine to which L12 dimers bind in a sequential fashion forming a multimeric L10(L12)X complex. Post-translationally, one or more lysine residues are methylated.

Its function is as follows. Forms part of the ribosomal stalk which helps the ribosome interact with GTP-bound translation factors. The polypeptide is Large ribosomal subunit protein uL11 (Geobacter sp. (strain M21)).